Here is a 616-residue protein sequence, read N- to C-terminus: Xaa-Pro aminopeptidase app-1 (616 aa).

A peptide-binding residues include Arg78 and His392. The Zn(2+) site is built by Asp413, Asp424, and His487. His487, His496, and Glu522 together coordinate a peptide. The Zn(2+) site is built by Glu522 and Glu536.

The protein belongs to the peptidase M24B family. As to quaternary structure, homodimer. May interact with pid-2, pid-4 and pid-5. Zn(2+) is required as a cofactor. As to expression, specifically expressed in the intestine.

The protein localises to the cytoplasm. It catalyses the reaction Release of any N-terminal amino acid, including proline, that is linked to proline, even from a dipeptide or tripeptide.. With respect to regulation, strongly inhibited by the metal ion chelators EDTA and 1,10-phenanthroline. Also inhibited by apstatin. Activity towards bradykinin is inhibited by Mn(2+) and Zn(2+) at all concentrations tested, whereas Co(2+) is inhibitory at concentrations above 100 uM and activatory at 10 uM. In terms of biological role, catalyzes the removal of a penultimate prolyl residue from the N-termini of peptides, such as Arg-Pro-Pro. Has activity towards the flp-9 neuropeptide KPSFVRF-amide. This is Xaa-Pro aminopeptidase app-1 from Caenorhabditis elegans.